The following is a 256-amino-acid chain: 5-keto-4-deoxy-D-glucarate aldolase (256 aa).

His50 functions as the Proton acceptor in the catalytic mechanism. Gln151 contacts substrate. Glu153 contributes to the Mg(2+) binding site. Ser178 and Asp179 together coordinate substrate. Asp179 lines the Mg(2+) pocket.

The protein belongs to the HpcH/HpaI aldolase family. KDGluc aldolase subfamily. In terms of assembly, homohexamer; trimer of dimers. The cofactor is Mg(2+).

The enzyme catalyses 5-dehydro-4-deoxy-D-glucarate = 2-hydroxy-3-oxopropanoate + pyruvate. The catalysed reaction is 2-dehydro-3-deoxy-D-glucarate = 2-hydroxy-3-oxopropanoate + pyruvate. Its pathway is carbohydrate acid metabolism; galactarate degradation; D-glycerate from galactarate: step 2/3. Functionally, catalyzes the reversible retro-aldol cleavage of both 5-keto-4-deoxy-D-glucarate and 2-keto-3-deoxy-D-glucarate to pyruvate and tartronic semialdehyde. In Salmonella gallinarum (strain 287/91 / NCTC 13346), this protein is 5-keto-4-deoxy-D-glucarate aldolase.